Reading from the N-terminus, the 400-residue chain is Argininosuccinate synthase (400 aa).

Alanine 9–serine 17 lines the ATP pocket. Tyrosine 87 lines the L-citrulline pocket. Residue glycine 117 participates in ATP binding. 3 residues coordinate L-aspartate: threonine 119, asparagine 123, and aspartate 124. Asparagine 123 serves as a coordination point for L-citrulline. Arginine 127, serine 176, serine 185, glutamate 261, and tyrosine 273 together coordinate L-citrulline.

The protein belongs to the argininosuccinate synthase family. Type 1 subfamily. Homotetramer.

The protein resides in the cytoplasm. It catalyses the reaction L-citrulline + L-aspartate + ATP = 2-(N(omega)-L-arginino)succinate + AMP + diphosphate + H(+). It participates in amino-acid biosynthesis; L-arginine biosynthesis; L-arginine from L-ornithine and carbamoyl phosphate: step 2/3. This Chlorobium phaeobacteroides (strain DSM 266 / SMG 266 / 2430) protein is Argininosuccinate synthase.